Consider the following 235-residue polypeptide: MKLTSPIFNDQQKRRAIIWLSFFHIFIIAASNYFVQIPFEITLKLTALGAANDFSFHSTWGTLTFPFIFLATDLTVRIFGAEDARKIIFVVMFPALIVSYVISVLFSESKFQGFESLTHFDLFVFRIAIASFAAYVVGQLLDVIVFNRLRQLKTWWVAPTSSMTFGSMADTFVFFSIAFYQSADPFMAEHWAQLGFVDYLFKLFIGIILFVPAYGVVLNVILRKLQMLVTERVPA.

Helical transmembrane passes span 17–37 (IIWL…FVQI), 56–76 (FHST…DLTV), 87–107 (IIFV…VLFS), 127–147 (IAIA…IVFN), 155–175 (WWVA…FVFF), and 201–221 (FKLF…LNVI).

This sequence belongs to the vitamin uptake transporter (VUT/ECF) (TC 2.A.88) family. Q precursor transporter subfamily.

Its subcellular location is the cell inner membrane. Involved in the import of queuosine (Q) precursors, required for Q precursor salvage. In Haemophilus influenzae (strain ATCC 51907 / DSM 11121 / KW20 / Rd), this protein is Probable queuosine precursor transporter.